The primary structure comprises 267 residues: Acyl-[acyl-carrier-protein]--UDP-N-acetylglucosamine O-acyltransferase (267 aa).

It belongs to the transferase hexapeptide repeat family. LpxA subfamily. In terms of assembly, homotrimer.

Its subcellular location is the cytoplasm. The catalysed reaction is a (3R)-hydroxyacyl-[ACP] + UDP-N-acetyl-alpha-D-glucosamine = a UDP-3-O-[(3R)-3-hydroxyacyl]-N-acetyl-alpha-D-glucosamine + holo-[ACP]. Its pathway is glycolipid biosynthesis; lipid IV(A) biosynthesis; lipid IV(A) from (3R)-3-hydroxytetradecanoyl-[acyl-carrier-protein] and UDP-N-acetyl-alpha-D-glucosamine: step 1/6. Its function is as follows. Involved in the biosynthesis of lipid A, a phosphorylated glycolipid that anchors the lipopolysaccharide to the outer membrane of the cell. The chain is Acyl-[acyl-carrier-protein]--UDP-N-acetylglucosamine O-acyltransferase from Cupriavidus pinatubonensis (strain JMP 134 / LMG 1197) (Cupriavidus necator (strain JMP 134)).